The chain runs to 274 residues: Glutamate racemase (274 aa).

Substrate is bound by residues 9–10 and 41–42; these read DS and YG. The Proton donor/acceptor role is filled by C73. Residue 74 to 75 coordinates substrate; it reads NT. C183 serves as the catalytic Proton donor/acceptor. 184–185 contacts substrate; sequence TH.

The protein belongs to the aspartate/glutamate racemases family.

The catalysed reaction is L-glutamate = D-glutamate. Its pathway is cell wall biogenesis; peptidoglycan biosynthesis. Its function is as follows. Provides the (R)-glutamate required for cell wall biosynthesis. This is Glutamate racemase from Shewanella baltica (strain OS195).